The following is a 372-amino-acid chain: Neutral protease 2 homolog MGYG_06241 (372 aa).

Positions 1 to 19 are cleaved as a signal peptide; sequence MQFFTAIAAISALVAPALA. Residues 20–188 constitute a propeptide that is removed on maturation; that stretch reads LPTQELPQAP…THFAGTLNRR (169 aa). Intrachain disulfides connect Cys195–Cys264 and Cys271–Cys289. His313 is a binding site for Zn(2+). The active site involves Glu314. 2 residues coordinate Zn(2+): His317 and Asp328.

It belongs to the peptidase M35 family. Requires Zn(2+) as cofactor.

The protein resides in the secreted. The catalysed reaction is Preferential cleavage of bonds with hydrophobic residues in P1'. Also 3-Asn-|-Gln-4 and 8-Gly-|-Ser-9 bonds in insulin B chain.. Secreted metalloproteinase that allows assimilation of proteinaceous substrates. Shows high activities on basic nuclear substrates such as histone and protamine. May be involved in virulence. This chain is Neutral protease 2 homolog MGYG_06241, found in Arthroderma gypseum (strain ATCC MYA-4604 / CBS 118893) (Microsporum gypseum).